The following is a 227-amino-acid chain: Glutathione S-transferase U17 (227 aa).

The GST N-terminal domain occupies 4–83; the sequence is SDVKLIGAWA…YIDDTWSSSG (80 aa). Residues 14-15, 40-41, 54-55, and 67-68 contribute to the glutathione site; these read SP, SK, KI, and ES. The GST C-terminal domain maps to 90-222; the sequence is DPYDRAMARF…KLAEFAKKIF (133 aa).

This sequence belongs to the GST superfamily. Tau family.

The protein resides in the cytoplasm. It localises to the cytosol. The catalysed reaction is RX + glutathione = an S-substituted glutathione + a halide anion + H(+). Involved in light signaling, mainly phyA-mediated photomorphogenesis and in the integration of various phytohormone signals to modulate various aspects of plant development by affecting glutathione pools. In vitro, possesses glutathione S-transferase activity toward 1-chloro-2,4-dinitrobenzene (CDNB) and benzyl isothiocyanate (BITC). The polypeptide is Glutathione S-transferase U17 (GSTU17) (Arabidopsis thaliana (Mouse-ear cress)).